Here is a 297-residue protein sequence, read N- to C-terminus: Calponin-1 (297 aa).

A Calponin-homology (CH) domain is found at 28–131 (HQREQELREW…STLLALASMA (104 aa)). Calponin-like repeat units lie at residues 164-189 (IGLQMGTNKFASQQGMTAYGTRRHLY), 204-229 (ISLQMGTNKGASQAGMTAPGTKRQIF), and 243-268 (VSLQMGSNKGASQRGMTVYGLPRQVY). T170 carries the post-translational modification Phosphothreonine; by ROCK2. The residue at position 175 (S175) is a Phosphoserine; by ROCK2. 2 positions are modified to phosphothreonine; by ROCK2: T180 and T184. T259 is subject to Phosphothreonine; by ROCK2.

It belongs to the calponin family.

Thin filament-associated protein that is implicated in the regulation and modulation of smooth muscle contraction. It is capable of binding to actin, calmodulin and tropomyosin. The interaction of calponin with actin inhibits the actomyosin Mg-ATPase activity. This chain is Calponin-1 (CNN1), found in Bos taurus (Bovine).